A 458-amino-acid chain; its full sequence is Exodeoxyribonuclease 7 large subunit (458 aa).

The protein belongs to the XseA family. Heterooligomer composed of large and small subunits.

The protein localises to the cytoplasm. It catalyses the reaction Exonucleolytic cleavage in either 5'- to 3'- or 3'- to 5'-direction to yield nucleoside 5'-phosphates.. Bidirectionally degrades single-stranded DNA into large acid-insoluble oligonucleotides, which are then degraded further into small acid-soluble oligonucleotides. In Escherichia coli O6:H1 (strain CFT073 / ATCC 700928 / UPEC), this protein is Exodeoxyribonuclease 7 large subunit.